A 353-amino-acid polypeptide reads, in one-letter code: Putative actin-28 (353 aa).

It belongs to the actin family.

The protein resides in the cytoplasm. It is found in the cytoskeleton. The catalysed reaction is ATP + H2O = ADP + phosphate + H(+). Functionally, actins are highly conserved proteins that are involved in various types of cell motility and are ubiquitously expressed in all eukaryotic cells. Multiple isoforms are involved in various cellular functions such as cytoskeleton structure, cell mobility, chromosome movement and muscle contraction. The chain is Putative actin-28 (act28) from Dictyostelium discoideum (Social amoeba).